A 246-amino-acid polypeptide reads, in one-letter code: tRNA (guanine-N(7)-)-methyltransferase (246 aa).

S-adenosyl-L-methionine contacts are provided by glutamate 76, glutamate 101, aspartate 128, and aspartate 151. The active site involves aspartate 151. Residue lysine 155 coordinates substrate. The interval 157-162 (RHNKRR) is interaction with RNA. Substrate-binding positions include aspartate 187 and 222–225 (TKFE).

The protein belongs to the class I-like SAM-binding methyltransferase superfamily. TrmB family.

The enzyme catalyses guanosine(46) in tRNA + S-adenosyl-L-methionine = N(7)-methylguanosine(46) in tRNA + S-adenosyl-L-homocysteine. It functions in the pathway tRNA modification; N(7)-methylguanine-tRNA biosynthesis. Functionally, catalyzes the formation of N(7)-methylguanine at position 46 (m7G46) in tRNA. This is tRNA (guanine-N(7)-)-methyltransferase from Dechloromonas aromatica (strain RCB).